The primary structure comprises 95 residues: MSYTIAAQIRTEIGKGSSRRLRHANKVPAVIYGPGKEAISIVFDHKDIINIQANEDFYTTDLTISLDGKDVAVRVQDMQRHAFKPLIEHIDFKFA.

The protein belongs to the bacterial ribosomal protein bL25 family. Part of the 50S ribosomal subunit; part of the 5S rRNA/L5/L18/L25 subcomplex. Contacts the 5S rRNA. Binds to the 5S rRNA independently of L5 and L18.

This is one of the proteins that binds to the 5S RNA in the ribosome where it forms part of the central protuberance. The sequence is that of Large ribosomal subunit protein bL25 from Shewanella piezotolerans (strain WP3 / JCM 13877).